The following is a 177-amino-acid chain: Large ribosomal subunit protein uL6 (177 aa).

Belongs to the universal ribosomal protein uL6 family. As to quaternary structure, part of the 50S ribosomal subunit.

Functionally, this protein binds to the 23S rRNA, and is important in its secondary structure. It is located near the subunit interface in the base of the L7/L12 stalk, and near the tRNA binding site of the peptidyltransferase center. The protein is Large ribosomal subunit protein uL6 of Bartonella bacilliformis (strain ATCC 35685 / KC583 / Herrer 020/F12,63).